Reading from the N-terminus, the 149-residue chain is Endoribonuclease YbeY (149 aa).

3 residues coordinate Zn(2+): His-106, His-110, and His-116.

This sequence belongs to the endoribonuclease YbeY family. Zn(2+) is required as a cofactor.

The protein resides in the cytoplasm. Single strand-specific metallo-endoribonuclease involved in late-stage 70S ribosome quality control and in maturation of the 3' terminus of the 16S rRNA. The protein is Endoribonuclease YbeY of Methylobacillus flagellatus (strain ATCC 51484 / DSM 6875 / VKM B-1610 / KT).